The sequence spans 338 residues: Lipoate-protein ligase A (338 aa).

The region spanning 29–216 is the BPL/LPL catalytic domain; it reads PATQRVLFLW…AFFAHYGERV (188 aa). ATP contacts are provided by residues R71, 76–79, and K134; that span reads GAVF. Position 134 (K134) interacts with (R)-lipoate.

Belongs to the LplA family. Monomer.

It localises to the cytoplasm. The catalysed reaction is L-lysyl-[lipoyl-carrier protein] + (R)-lipoate + ATP = N(6)-[(R)-lipoyl]-L-lysyl-[lipoyl-carrier protein] + AMP + diphosphate + H(+). It functions in the pathway protein modification; protein lipoylation via exogenous pathway; protein N(6)-(lipoyl)lysine from lipoate: step 1/2. It participates in protein modification; protein lipoylation via exogenous pathway; protein N(6)-(lipoyl)lysine from lipoate: step 2/2. Catalyzes both the ATP-dependent activation of exogenously supplied lipoate to lipoyl-AMP and the transfer of the activated lipoyl onto the lipoyl domains of lipoate-dependent enzymes. This chain is Lipoate-protein ligase A, found in Escherichia fergusonii (strain ATCC 35469 / DSM 13698 / CCUG 18766 / IAM 14443 / JCM 21226 / LMG 7866 / NBRC 102419 / NCTC 12128 / CDC 0568-73).